Consider the following 428-residue polypeptide: MTELPRLPAQGGCSNAPILKQRGQREVFCGLTGIIWLHRKMQDAFFLVVGSRTCAHLLQSAAGVMIFAEPRFGTAILEETDLAGLADAQAELDKVVDQLLARRTDIKQLFLVGSCPSEVIKLDLSRAAERMTEKYAPSVRVLNFSGSGIETTFTQGEDACLASMVPVLPKTDTRQLLLVGALPDVVEEQAVSLLEQMGIGPIKVLPAPRADTDLGIGENTVFALTQPFLGDTHGALERRGARHLPAPFPFGEEGTTAWLRVIADEFGVDADTFERVTAAPRARARKAISQASEALRGKTIFFFPDSQLEIPLARFLTRECGMEAIEVGSPFVHKGIIGSDLEMLAQGPVISEGQDVDLQLDRCRAARPDLTVCGLGLANPLEAEGLATKWAIELVFTPVHFYEQAGDLAGLFSRPVRRAGLLKVEAAE.

Cys-29, Cys-54, and Cys-115 together coordinate [4Fe-4S] cluster.

It belongs to the BchN/ChlN family. Protochlorophyllide reductase is composed of three subunits; BchL, BchN and BchB. Forms a heterotetramer of two BchB and two BchN subunits. [4Fe-4S] cluster is required as a cofactor.

The enzyme catalyses chlorophyllide a + oxidized 2[4Fe-4S]-[ferredoxin] + 2 ADP + 2 phosphate = protochlorophyllide a + reduced 2[4Fe-4S]-[ferredoxin] + 2 ATP + 2 H2O. Its pathway is porphyrin-containing compound metabolism; bacteriochlorophyll biosynthesis (light-independent). In terms of biological role, component of the dark-operative protochlorophyllide reductase (DPOR) that uses Mg-ATP and reduced ferredoxin to reduce ring D of protochlorophyllide (Pchlide) to form chlorophyllide a (Chlide). This reaction is light-independent. The NB-protein (BchN-BchB) is the catalytic component of the complex. In Roseobacter denitrificans (strain ATCC 33942 / OCh 114) (Erythrobacter sp. (strain OCh 114)), this protein is Light-independent protochlorophyllide reductase subunit N.